We begin with the raw amino-acid sequence, 444 residues long: sn-glycerol-3-phosphate-binding periplasmic protein UgpB (444 aa).

An N-terminal signal peptide occupies residues 1-30; it reads MFNNTIRKTHAIRTAAACVAFALMSAGAQA. The sn-glycerol 3-phosphate site is built by Tyr72, Glu96, Ser151, Ser277, Gly314, Tyr353, and Arg404.

Belongs to the bacterial solute-binding protein 1 family. In terms of assembly, the complex is composed of two ATP-binding proteins (UgpC), two transmembrane proteins (UgpA and UgpE) and a solute-binding protein (UgpB).

Its subcellular location is the periplasm. Its function is as follows. Part of the ABC transporter complex UgpBAEC involved in sn-glycerol-3-phosphate (G3P) import. Binds G3P. The sequence is that of sn-glycerol-3-phosphate-binding periplasmic protein UgpB (ugpB) from Pectobacterium atrosepticum (strain SCRI 1043 / ATCC BAA-672) (Erwinia carotovora subsp. atroseptica).